Reading from the N-terminus, the 190-residue chain is Potassium-transporting ATPase KdpC subunit (190 aa).

Residues 10–30 (VLLLVLTGLTGFAYPLLSTAI) form a helical membrane-spanning segment.

The protein belongs to the KdpC family. In terms of assembly, the system is composed of three essential subunits: KdpA, KdpB and KdpC.

Its subcellular location is the cell inner membrane. Its function is as follows. Part of the high-affinity ATP-driven potassium transport (or Kdp) system, which catalyzes the hydrolysis of ATP coupled with the electrogenic transport of potassium into the cytoplasm. This subunit acts as a catalytic chaperone that increases the ATP-binding affinity of the ATP-hydrolyzing subunit KdpB by the formation of a transient KdpB/KdpC/ATP ternary complex. The protein is Potassium-transporting ATPase KdpC subunit of Sorangium cellulosum (strain So ce56) (Polyangium cellulosum (strain So ce56)).